A 138-amino-acid polypeptide reads, in one-letter code: Single-stranded DNA-binding protein 4 (138 aa).

One can recognise an SSB domain in the interval 1–104 (MINNVVLIGR…VVADSFQILE (104 aa)). A disordered region spans residues 107-138 (DNSTNQASMDDQLPPSFGNSQPMDISDDDLPF). An Important for interaction with partner proteins motif is present at residues 133–138 (DDDLPF).

Homotetramer.

Plays an important role in DNA replication, recombination and repair. Binds to ssDNA and to an array of partner proteins to recruit them to their sites of action during DNA metabolism. The chain is Single-stranded DNA-binding protein 4 (ssb4) from Streptococcus agalactiae serotype V (strain ATCC BAA-611 / 2603 V/R).